Reading from the N-terminus, the 436-residue chain is MHKHLHHVSHTIKSYLSTLIALENLKVVAFLISLLSCLVAGSILLFTLYTSSFHEVLGLSYLQINMISSLSALGMYFCLPVLGYLADSYGPALLSLFSIWFFCPSYFVNSYLVSTQSGSVIGFCVCFCFIGLATSSLYFSSLITCARICPDHKGLAISLPITCYGLSALLGAQILKLPYFHRHDVLDLEVVFSFFAWLYLVVGIASFVSSSIVIVESELLFGVTPDEETALLELTPTRSLEPPNHRQRFVSFVKDPSAWILLVSLILNIGPMESYQNNLSSILKHTNGADLPNQVSIMAASSTGARLLLGVLSDYSSKYVCRVWLLVVVIVVGVAGQMSETSAILNGVSYGGMFTIYPTIVASIWGIDIMGSTWGSFMVAPALGSVIFSMFYGRNADSCSDCLSHYFYTTAGAMIVSCIFVLLAWKIWYARGFTRF.

7 consecutive transmembrane segments (helical) span residues 27 to 47 (VVAFLISLLSCLVAGSILLFT), 66 to 86 (MISSLSALGMYFCLPVLGYLA), 93 to 113 (LLSLFSIWFFCPSYFVNSYLV), 119 to 139 (SVIGFCVCFCFIGLATSSLYF), 155 to 175 (LAISLPITCYGLSALLGAQIL), 188 to 208 (LEVVFSFFAWLYLVVGIASFV), and 249 to 269 (FVSFVKDPSAWILLVSLILNI). The N-linked (GlcNAc...) asparagine glycan is linked to Asn278. 5 consecutive transmembrane segments (helical) span residues 295–312 (VSIMAASSTGARLLLGVL), 325–345 (LLVVVIVVGVAGQMSETSAIL), 347–367 (GVSYGGMFTIYPTIVASIWGI), 373–393 (TWGSFMVAPALGSVIFSMFYG), and 410–430 (TAGAMIVSCIFVLLAWKIWYA).

The protein belongs to the major facilitator superfamily.

The protein localises to the vacuole membrane. In terms of biological role, probable transporter. This is Probable transporter MCH1 (MCH1) from Candida albicans (strain SC5314 / ATCC MYA-2876) (Yeast).